A 415-amino-acid polypeptide reads, in one-letter code: Beta-1,4-glucuronyltransferase 1 (415 aa).

Topologically, residues 1–8 (MQMSYAIR) are cytoplasmic. Residues 9 to 36 (CAFYQLLLAALMLVAMLQLLYLSLLSGL) traverse the membrane as a helical; Signal-anchor for type II membrane protein segment. Residues 37–415 (HGQEEQEQYF…ARYPNSPHRC (379 aa)) are Lumenal-facing. N-linked (GlcNAc...) asparagine glycosylation occurs at Asn204. Mn(2+)-binding residues include Asp227 and Asp229. Asn300 carries N-linked (GlcNAc...) asparagine glycosylation.

This sequence belongs to the glycosyltransferase 49 family. Interacts with LARGE1 and LARGE2. It depends on Mn(2+) as a cofactor.

The protein resides in the golgi apparatus membrane. The enzyme catalyses 3-O-[beta-D-Xyl-(1-&gt;4)-Rib-ol-P-Rib-ol-P-3-beta-D-GalNAc-(1-&gt;3)-beta-D-GlcNAc-(1-&gt;4)-(O-6-P-alpha-D-Man)]-Thr-[protein] + UDP-alpha-D-glucuronate = 3-O-[beta-D-GlcA-(1-&gt;3)-beta-D-Xyl-(1-&gt;4)-Rib-ol-P-Rib-ol-P-3-beta-D-GalNAc-(1-&gt;3)-beta-D-GlcNAc-(1-&gt;4)-(O-6-P-alpha-D-Man)]-Thr-[protein] + UDP + H(+). It functions in the pathway protein modification; protein glycosylation. Beta-1,4-glucuronyltransferase involved in O-mannosylation of alpha-dystroglycan (DAG1). Transfers a glucuronic acid (GlcA) residue onto a xylose (Xyl) acceptor to produce the glucuronyl-beta-1,4-xylose-beta disaccharide primer, which is further elongated by LARGE1, during synthesis of phosphorylated O-mannosyl glycan. Phosphorylated O-mannosyl glycan is a carbohydrate structure present in alpha-dystroglycan (DAG1), which is required for binding laminin G-like domain-containing extracellular proteins with high affinity. Required for axon guidance; via its function in O-mannosylation of alpha-dystroglycan (DAG1). The polypeptide is Beta-1,4-glucuronyltransferase 1 (Mus musculus (Mouse)).